A 411-amino-acid chain; its full sequence is MLAQNSREVLDKDLESHIPGAYSPAPPSSSLPTQNESNLQQSEKPLKHFENKKFKGEDVFAHSISKPFDGQNDEEKPSLYSHLTNELYETHDSSDYFGTYMEREESGHDEEEADKDASFTGYYNSRNNDEEGSELADSQMLPMTESFADIEDIHHHQHEDEFSSSNKDKGFTYEKPVTELPPKRPPYHYESSSTSISFVNGGPNFRKVKSGLLKPDADAASNLSTTSLVNQEYVMKQVTPNEYSMEYLRESFPQTPMGTEASGYSFDRTPHKSDIQASDRLNALNEKLLQGIQQSHQPYHYTNVKDSQGSHQTKVTIEENMEAPSHQAANRTTLTDSPLGIVEDETTILTDLEPSGPGLQKRASETSMSTNVSLPYYQNGRRVRNILTPYPTVSLASTMTSETEDVSEERI.

Disordered regions lie at residues 1–52, 102–137, and 156–191; these read MLAQ…FENK, EREE…ELAD, and HQHE…HYES. A compositionally biased stretch (polar residues) spans 33-43; the sequence is TQNESNLQQSE. Residues 156–172 are compositionally biased toward basic and acidic residues; sequence HQHEDEFSSSNKDKGFT.

It localises to the cytoplasm. The protein localises to the nucleus. In terms of biological role, has a role in meiosis. The protein is Meiotically up-regulated gene 147 protein (mug147) of Schizosaccharomyces pombe (strain 972 / ATCC 24843) (Fission yeast).